Consider the following 404-residue polypeptide: Glucose-1-phosphate adenylyltransferase (404 aa).

Residues Tyr-99, Gly-164, 179 to 180 (EK), and Ser-197 each bind alpha-D-glucose 1-phosphate.

It belongs to the bacterial/plant glucose-1-phosphate adenylyltransferase family.

The enzyme catalyses alpha-D-glucose 1-phosphate + ATP + H(+) = ADP-alpha-D-glucose + diphosphate. Its pathway is glycan biosynthesis; glycogen biosynthesis. Involved in the biosynthesis of ADP-glucose building block, required in the biosynthesis of maltose-1-phosphate (M1P) and in the elongation reactions to produce linear alpha-1,4-glucans. Catalyzes the reaction between ATP and alpha-D-glucose 1-phosphate (G1P) to produce pyrophosphate and ADP-Glc. In Mycolicibacterium smegmatis (strain ATCC 700084 / mc(2)155) (Mycobacterium smegmatis), this protein is Glucose-1-phosphate adenylyltransferase.